The following is a 333-amino-acid chain: Protein amalgam (333 aa).

A signal peptide spans 1-23; that stretch reads MARLRLLIGLIFCLAISLDSVLS. The Ig-like V-type domain maps to 25-128; it reads PVISQISKDV…VLVSATEKVT (104 aa). Asn-45 and Asn-86 each carry an N-linked (GlcNAc...) asparagine glycan. 3 cysteine pairs are disulfide-bonded: Cys-46/Cys-117, Cys-161/Cys-208, and Cys-251/Cys-307. Ig-like C2-type domains follow at residues 139–223 and 230–323; these read PVIA…RLIR and PQIA…LHLF. Asn-308 carries N-linked (GlcNAc...) asparagine glycosylation.

It is found in the cell membrane. The polypeptide is Protein amalgam (Ama) (Drosophila melanogaster (Fruit fly)).